A 368-amino-acid polypeptide reads, in one-letter code: Phosphoserine aminotransferase (368 aa).

Arg44 lines the L-glutamate pocket. Pyridoxal 5'-phosphate contacts are provided by residues 78–79 (AT), Trp104, Thr157, Asp179, and Gln202. Position 203 is an N6-(pyridoxal phosphate)lysine (Lys203). 244–245 (NT) provides a ligand contact to pyridoxal 5'-phosphate.

It belongs to the class-V pyridoxal-phosphate-dependent aminotransferase family. SerC subfamily. Homodimer. The cofactor is pyridoxal 5'-phosphate.

It localises to the cytoplasm. It catalyses the reaction O-phospho-L-serine + 2-oxoglutarate = 3-phosphooxypyruvate + L-glutamate. The catalysed reaction is 4-(phosphooxy)-L-threonine + 2-oxoglutarate = (R)-3-hydroxy-2-oxo-4-phosphooxybutanoate + L-glutamate. It participates in amino-acid biosynthesis; L-serine biosynthesis; L-serine from 3-phospho-D-glycerate: step 2/3. It functions in the pathway cofactor biosynthesis; pyridoxine 5'-phosphate biosynthesis; pyridoxine 5'-phosphate from D-erythrose 4-phosphate: step 3/5. Its function is as follows. Catalyzes the reversible conversion of 3-phosphohydroxypyruvate to phosphoserine and of 3-hydroxy-2-oxo-4-phosphonooxybutanoate to phosphohydroxythreonine. This chain is Phosphoserine aminotransferase, found in Neisseria meningitidis serogroup A / serotype 4A (strain DSM 15465 / Z2491).